The chain runs to 375 residues: NADH-ubiquinone oxidoreductase 40 kDa subunit, mitochondrial (375 aa).

Residues 1 to 26 (MAPLTAAMRSTPRIIVSNAFGFQRRA) constitute a mitochondrion transit peptide.

Belongs to the complex I NDUFA9 subunit family. In terms of assembly, complex I is composed of about 40 different subunits. The cofactor is FAD.

It localises to the mitochondrion matrix. Its function is as follows. Accessory subunit of the mitochondrial membrane respiratory chain NADH dehydrogenase (Complex I), that is believed not to be involved in catalysis. Complex I functions in the transfer of electrons from NADH to the respiratory chain. The immediate electron acceptor for the enzyme is believed to be ubiquinone. This Neurospora crassa (strain ATCC 24698 / 74-OR23-1A / CBS 708.71 / DSM 1257 / FGSC 987) protein is NADH-ubiquinone oxidoreductase 40 kDa subunit, mitochondrial (nuo40).